Reading from the N-terminus, the 502-residue chain is UPF0371 protein CLH_2534 (502 aa).

Belongs to the UPF0371 family.

This chain is UPF0371 protein CLH_2534, found in Clostridium botulinum (strain Alaska E43 / Type E3).